We begin with the raw amino-acid sequence, 134 residues long: ATP synthase epsilon chain, plastid (134 aa).

This sequence belongs to the ATPase epsilon chain family. In terms of assembly, F-type ATPases have 2 components, CF(1) - the catalytic core - and CF(0) - the membrane proton channel. CF(1) has five subunits: alpha(3), beta(3), gamma(1), delta(1), epsilon(1). CF(0) has three main subunits: a, b and c.

The protein resides in the plastid membrane. Produces ATP from ADP in the presence of a proton gradient across the membrane. The sequence is that of ATP synthase epsilon chain, plastid from Prototheca wickerhamii.